We begin with the raw amino-acid sequence, 267 residues long: Glutamate racemase (267 aa).

Residues 10–11 (DS) and 42–43 (YG) contribute to the substrate site. Cysteine 73 (proton donor/acceptor) is an active-site residue. Substrate is bound at residue 74 to 75 (NT). Catalysis depends on cysteine 183, which acts as the Proton donor/acceptor. 184 to 185 (TH) is a substrate binding site.

Belongs to the aspartate/glutamate racemases family.

It catalyses the reaction L-glutamate = D-glutamate. It participates in cell wall biogenesis; peptidoglycan biosynthesis. Its function is as follows. Provides the (R)-glutamate required for cell wall biosynthesis. The sequence is that of Glutamate racemase from Lactobacillus helveticus (strain DPC 4571).